The primary structure comprises 1165 residues: Activity-dependent neuroprotector homeobox protein 2 (1165 aa).

A C2H2-type 1 zinc finger spans residues 73 to 96 (YCCSLCRYSTKVLTSLKNHLHRYH). Residues 106-128 (IPCPNCPFSSQPRVVGKHFRMFH) form a C2H2-type 2; degenerate zinc finger. Residue Lys146 forms a Glycyl lysine isopeptide (Lys-Gly) (interchain with G-Cter in SUMO2) linkage. The segment at 155–178 (FTCLKCNFSNTLYYSMKKHVLVAH) adopts a C2H2-type 3; degenerate zinc-finger fold. The segment at 215-240 (YYCKKCSAIASSQDALMYHILTSDAH) adopts a C2H2-type 4 zinc-finger fold. The span at 303–318 (SGTVQSVTVTPGTSGS) shows a compositional bias: low complexity. Positions 303–327 (SGTVQSVTVTPGTSGSLTHSPPTTA) are disordered. The C2H2-type 5; degenerate zinc-finger motif lies at 696 to 718 (KTCPVCNELFPSNVYQVHMEVAH). Residues 724–746 (QLCQVCNELFPANVYQVHMEVAH) form a C2H2-type 6; degenerate zinc finger. The C2H2-type 7; degenerate zinc-finger motif lies at 777-798 (VRCLSCKCLVSQEELMHHLLMH). 2 C2H2-type zinc fingers span residues 800 to 823 (LGCL…RTKH) and 905 to 935 (LTCP…PTVH). Positions 1005–1068 (PVKRKLPEGH…SGPSEDSLQA (64 aa)) are disordered. Residues Lys1009 and Lys1048 each participate in a glycyl lysine isopeptide (Lys-Gly) (interchain with G-Cter in SUMO2) cross-link. The span at 1009–1024 (KLPEGHLGPEDQRDGE) shows a compositional bias: basic and acidic residues. The segment at residues 1090-1132 (DYFHRRPYPSRKEVELLSSLLWVWKIDVASFFGKRRYICMKAI) is a DNA-binding region (homeobox).

It belongs to the krueppel C2H2-type zinc-finger protein family. May interact with SMARCA4/BRG1. As to expression, expressed widely, with the highest level in the brain.

It localises to the nucleus. Functionally, may be involved in transcriptional regulation. May play a role in neuronal function; perhaps involved in protection of brain tissues from oxidative stress. May be involved in erythroid differentiation. This is Activity-dependent neuroprotector homeobox protein 2 (Adnp2) from Mus musculus (Mouse).